Here is a 362-residue protein sequence, read N- to C-terminus: Methylthioribose-1-phosphate isomerase (362 aa).

Substrate is bound by residues 53-55 (RGA), Arg-90, and Gln-201. Asp-241 functions as the Proton donor in the catalytic mechanism. 251–252 (NK) provides a ligand contact to substrate.

The protein belongs to the eIF-2B alpha/beta/delta subunits family. MtnA subfamily.

It carries out the reaction 5-(methylsulfanyl)-alpha-D-ribose 1-phosphate = 5-(methylsulfanyl)-D-ribulose 1-phosphate. Its pathway is amino-acid biosynthesis; L-methionine biosynthesis via salvage pathway; L-methionine from S-methyl-5-thio-alpha-D-ribose 1-phosphate: step 1/6. Its function is as follows. Catalyzes the interconversion of methylthioribose-1-phosphate (MTR-1-P) into methylthioribulose-1-phosphate (MTRu-1-P). In Dechloromonas aromatica (strain RCB), this protein is Methylthioribose-1-phosphate isomerase.